We begin with the raw amino-acid sequence, 122 residues long: Alpha-amylase/trypsin inhibitor (122 aa).

Disulfide bonds link Cys6-Cys55, Cys20-Cys44, Cys29-Cys85, Cys45-Cys103, and Cys57-Cys114.

It belongs to the protease inhibitor I6 (cereal trypsin/alpha-amylase inhibitor) family. Seeds.

It localises to the secreted. May play a protective role against endo- and exogenous hydrolytic activities in the Ragi seeds. This is Alpha-amylase/trypsin inhibitor from Eleusine coracana (Indian finger millet).